A 284-amino-acid chain; its full sequence is Tropomyosin Por p 1.0101 (284 aa).

At Met1 the chain carries N-acetylmethionine. Residues 1–21 (MDAIKKKMQAMKLEKDDAMDR) form a disordered region. The stretch at 1–280 (MDAIKKKMQA…TDELDQAFSE (280 aa)) forms a coiled coil. Positions 12–21 (KLEKDDAMDR) are enriched in basic and acidic residues.

This sequence belongs to the tropomyosin family. As to quaternary structure, homodimer. Expressed in muscle (at protein level). Expressed in pincer muscles.

In terms of biological role, tropomyosin, in association with the troponin complex, plays a central role in the calcium dependent regulation of muscle contraction. The chain is Tropomyosin Por p 1.0101 from Portunus pelagicus (Blue swimmer crab).